The primary structure comprises 433 residues: GTPase Der (433 aa).

EngA-type G domains follow at residues 5 to 167 (KKVL…GEVG) and 174 to 349 (IKVG…DQLE). GTP contacts are provided by residues 11–18 (GRPNVGKS), 58–62 (DTGGF), 119–122 (NKVD), 180–187 (GKPNSGKS), 227–231 (DTAGI), and 292–295 (SKWD). The region spanning 349 to 429 (ELKTSTPDLN…PILVELKEKI (81 aa)) is the KH-like domain.

This sequence belongs to the TRAFAC class TrmE-Era-EngA-EngB-Septin-like GTPase superfamily. EngA (Der) GTPase family. As to quaternary structure, associates with the 50S ribosomal subunit.

In terms of biological role, GTPase that plays an essential role in the late steps of ribosome biogenesis. This chain is GTPase Der, found in Borreliella burgdorferi (strain ATCC 35210 / DSM 4680 / CIP 102532 / B31) (Borrelia burgdorferi).